The primary structure comprises 263 residues: Metaxin-2 (263 aa).

Position 2 is an N-acetylserine (S2).

It belongs to the metaxin family. Interacts with MTX1/metaxin-1. Associates with the mitochondrial contact site and cristae organizing system (MICOS) complex, composed of at least MICOS10/MIC10, CHCHD3/MIC19, CHCHD6/MIC25, APOOL/MIC27, IMMT/MIC60, APOO/MIC23/MIC26 and QIL1/MIC13. This complex was also known under the names MINOS or MitOS complex. The MICOS complex associates with mitochondrial outer membrane proteins SAMM50, MTX1 and MTX2 (together described as components of the mitochondrial outer membrane sorting assembly machinery (SAM) complex) and DNAJC11, mitochondrial inner membrane protein TMEM11 and with HSPA9. The MICOS and SAM complexes together with DNAJC11 are part of a large protein complex spanning both membranes termed the mitochondrial intermembrane space bridging (MIB) complex.

It is found in the mitochondrion outer membrane. Its subcellular location is the mitochondrion. In terms of biological role, involved in transport of proteins into the mitochondrion. The polypeptide is Metaxin-2 (Mtx2) (Mus musculus (Mouse)).